A 538-amino-acid polypeptide reads, in one-letter code: CTP synthase (538 aa).

The tract at residues 1–267 (MDRAKFIFVT…LTPIARRFNL (267 aa)) is amidoligase domain. A CTP-binding site is contributed by serine 15. A UTP-binding site is contributed by serine 15. ATP is bound by residues 16-21 (SLGKGI) and aspartate 73. Positions 73 and 141 each coordinate Mg(2+). Residues 148 to 150 (DME), 188 to 193 (KTKPTQ), and lysine 224 contribute to the CTP site. Residues 188–193 (KTKPTQ) and lysine 224 contribute to the UTP site. The Glutamine amidotransferase type-1 domain maps to 292–538 (KIGFVGKYLS…DFIKSALSKS (247 aa)). L-glutamine is bound at residue glycine 351. The Nucleophile; for glutamine hydrolysis role is filled by cysteine 378. Residues 379-382 (LGMQ), glutamate 402, and arginine 469 each bind L-glutamine. Residues histidine 513 and glutamate 515 contribute to the active site.

This sequence belongs to the CTP synthase family. Homotetramer.

The enzyme catalyses UTP + L-glutamine + ATP + H2O = CTP + L-glutamate + ADP + phosphate + 2 H(+). It carries out the reaction L-glutamine + H2O = L-glutamate + NH4(+). It catalyses the reaction UTP + NH4(+) + ATP = CTP + ADP + phosphate + 2 H(+). The protein operates within pyrimidine metabolism; CTP biosynthesis via de novo pathway; CTP from UDP: step 2/2. With respect to regulation, allosterically activated by GTP, when glutamine is the substrate; GTP has no effect on the reaction when ammonia is the substrate. The allosteric effector GTP functions by stabilizing the protein conformation that binds the tetrahedral intermediate(s) formed during glutamine hydrolysis. Inhibited by the product CTP, via allosteric rather than competitive inhibition. Its function is as follows. Catalyzes the ATP-dependent amination of UTP to CTP with either L-glutamine or ammonia as the source of nitrogen. Regulates intracellular CTP levels through interactions with the four ribonucleotide triphosphates. This chain is CTP synthase, found in Helicobacter pylori (strain HPAG1).